A 1748-amino-acid chain; its full sequence is RANBP2-like and GRIP domain-containing protein 1 (1748 aa).

T14 carries the phosphothreonine modification. TPR repeat units lie at residues 51 to 84 (PRAH…NPPQ), 575 to 608 (QKMG…LKII), and 639 to 672 (EDAH…VSYW). Residues 751–796 (GPLYKNGSLRNADSEIKHSTPSPTKYSLSPSKSYKYSPKTPPRWAE) are disordered. The span at 769-788 (STPSPTKYSLSPSKSYKYSP) shows a compositional bias: low complexity. One can recognise a RanBD1 1 domain in the interval 1021-1157 (HFEPVVQMPE…FEECQRLLLD (137 aa)). Disordered regions lie at residues 1198-1233 (TKVT…TLEW) and 1291-1316 (AKLN…ERDG). Residues 1220 to 1229 (IKPNPENTGP) are compositionally biased toward polar residues. Acidic residues predominate over residues 1302 to 1314 (TDEESDVTQEEER). The region spanning 1318 to 1454 (YFEPVVPLPD…FDEAKTAQEK (137 aa)) is the RanBD1 2 domain. Over residues 1565–1578 (NDSETSSVAQSGSE) the composition is skewed to polar residues. The segment at 1565–1606 (NDSETSSVAQSGSESKVEPKKCELSKNSDIEQSSDSKVKNLS) is disordered. Residues 1579–1602 (SKVEPKKCELSKNSDIEQSSDSKV) show a composition bias toward basic and acidic residues. In terms of domain architecture, GRIP spans 1685-1735 (QEESAANVEHLKNVLLQFIFLKPGSERESLLPVINTMLQLSPEEKGKLAAV).

The sequence is that of RANBP2-like and GRIP domain-containing protein 1 (RGPD1) from Homo sapiens (Human).